We begin with the raw amino-acid sequence, 178 residues long: ATP-dependent protease subunit HslV (178 aa).

The active site involves Thr-2. Residues Gly-157, Cys-160, and Thr-163 each contribute to the Na(+) site.

The protein belongs to the peptidase T1B family. HslV subfamily. A double ring-shaped homohexamer of HslV is capped on each side by a ring-shaped HslU homohexamer. The assembly of the HslU/HslV complex is dependent on binding of ATP.

Its subcellular location is the cytoplasm. It catalyses the reaction ATP-dependent cleavage of peptide bonds with broad specificity.. Allosterically activated by HslU binding. Functionally, protease subunit of a proteasome-like degradation complex believed to be a general protein degrading machinery. The sequence is that of ATP-dependent protease subunit HslV from Hamiltonella defensa subsp. Acyrthosiphon pisum (strain 5AT).